The sequence spans 582 residues: Actin-histidine N-methyltransferase (582 aa).

Residues Arg75, 104 to 106 (EGF), Arg254, 275 to 279 (DMCNH), and 325 to 327 (NGF) each bind S-adenosyl-L-methionine. Positions 94 to 314 (DGFELVEFPE…SGEQIYIFYG (221 aa)) constitute an SET domain. Residues 550–582 (DKDLLPNGTKSENDSFLAEDNQQETGNAKDFCS) form a disordered region.

The protein belongs to the class V-like SAM-binding methyltransferase superfamily. SETD3 actin-histidine methyltransferase family.

The protein localises to the cytoplasm. It carries out the reaction L-histidyl-[protein] + S-adenosyl-L-methionine = N(tele)-methyl-L-histidyl-[protein] + S-adenosyl-L-homocysteine + H(+). Functionally, protein-histidine N-methyltransferase that specifically mediates 3-methylhistidine (tele-methylhistidine) methylation of actin at 'His-73'. Does not have protein-lysine N-methyltransferase activity and probably only catalyzes histidine methylation of actin. This chain is Actin-histidine N-methyltransferase, found in Xenopus tropicalis (Western clawed frog).